The sequence spans 306 residues: Large ribosomal subunit protein uL2m (306 aa).

The transit peptide at 1–60 directs the protein to the mitochondrion; it reads MALCALTSALRSLSLASAAITARVPTLLPAAQIQSNVLLQLPPALVSPSYRPVHMSADRS.

It belongs to the universal ribosomal protein uL2 family. Component of the mitochondrial ribosome large subunit (39S) which comprises a 16S rRNA and about 50 distinct proteins.

It localises to the mitochondrion. The polypeptide is Large ribosomal subunit protein uL2m (Mrpl2) (Mus musculus (Mouse)).